Here is a 493-residue protein sequence, read N- to C-terminus: Voltage-gated potassium channel regulatory subunit KCNF1 (493 aa).

Topologically, residues 1–183 (MDASAEQSLP…KPESSCPARV (183 aa)) are cytoplasmic. A helical transmembrane segment spans residues 184–204 (VAVLSFLLILVSSVVMCMGTI). At 205–223 (PELQVVDSEGNRVEHPTLE) the chain is on the extracellular side. Residues 224–244 (NVETACIGWFTLEYLLRLFSS) traverse the membrane as a helical segment. The Cytoplasmic segment spans residues 245-249 (PNKLH). Residues 250–270 (FALSFMNIVDVLAILPFYVSL) form a helical membrane-spanning segment. The Extracellular portion of the chain corresponds to 271-289 (TLTHLGARMMELTNVQQAV). The chain crosses the membrane as a helical; Voltage-sensor span at residues 290 to 310 (QALRIMRIARIFKLARHSSGL). Topologically, residues 311–324 (QTLTYALKRSFKEL) are cytoplasmic. The helical transmembrane segment at 325–345 (GLLLMYLAVGIFVFSALGYTM) threads the bilayer. Residues 346 to 357 (EQSHPETLFKSI) lie on the Extracellular side of the membrane. Positions 358-378 (PQSFWWAIITMTTVGYGDIYP) form an intramembrane region, pore-forming. The short motif at 370 to 375 (TVGYGD) is the Selectivity filter element. Residues 379–385 (KTTLGKL) are Extracellular-facing. A helical membrane pass occupies residues 386 to 406 (NAAISFLCGVIAIALPIHPII). Topologically, residues 407–493 (NNFVRYYNKQ…HHRTRLQSCK (87 aa)) are cytoplasmic. The segment at 433–468 (NSSSAESKPGGSRSDLDTLPPEPAAREGPSWGSRLK) is disordered.

Belongs to the potassium channel family. F (TC 1.A.1.2) subfamily. Kv5.1/KCNF1 sub-subfamily. In terms of assembly, heterotetramer with KCNB1 or KCNB2. Expressed in brain namely in the piriform cortex, olfactory tubercle, and medial habenular nucleus. Also expressed in the medial amygdaloid nuclei and the lateral amygdaloid area.

The protein resides in the cell membrane. Its function is as follows. Regulatory alpha-subunit of the voltage-gated potassium (Kv) channel which, when coassembled with KCNB1 or KCNB2, can modulate their expression and their gating kinetics by acting on deactivation upon repolarization and inactivation during maintained depolarization. Accelerates inactivation but has relatively little effect on deactivation. Coexpression with KCNB1 or KCNB2 markedly slows inactivation. Each modulatory subunit has its own specific properties of regulation, and can lead to extensive inhibitions, to large changes in kinetics, and/or to large shifts in the voltage dependencies of the inactivation process. The gating kinetics depends on the nature and stoichiometry of the associated regulatory sunbunit. Fails to produce a potassium current when expressed alone. This Rattus norvegicus (Rat) protein is Voltage-gated potassium channel regulatory subunit KCNF1.